Here is a 498-residue protein sequence, read N- to C-terminus: 3-octaprenyl-4-hydroxybenzoate carboxy-lyase (498 aa).

Asparagine 176 is a Mn(2+) binding site. Prenylated FMN-binding positions include 179 to 181 (IYR), 193 to 195 (RWL), and 198 to 199 (RG). Glutamate 242 contacts Mn(2+). Aspartate 291 acts as the Proton donor in catalysis.

The protein belongs to the UbiD family. In terms of assembly, homohexamer. Requires prenylated FMN as cofactor. It depends on Mn(2+) as a cofactor.

It is found in the cell membrane. The enzyme catalyses a 4-hydroxy-3-(all-trans-polyprenyl)benzoate + H(+) = a 2-(all-trans-polyprenyl)phenol + CO2. Its pathway is cofactor biosynthesis; ubiquinone biosynthesis. Functionally, catalyzes the decarboxylation of 3-octaprenyl-4-hydroxy benzoate to 2-octaprenylphenol, an intermediate step in ubiquinone biosynthesis. This chain is 3-octaprenyl-4-hydroxybenzoate carboxy-lyase, found in Escherichia coli O6:K15:H31 (strain 536 / UPEC).